A 481-amino-acid chain; its full sequence is Ribulose bisphosphate carboxylase large chain (481 aa).

The propeptide occupies 1–2; the sequence is MS. N-acetylproline is present on proline 3. Position 14 is an N6,N6,N6-trimethyllysine (lysine 14). 2 residues coordinate substrate: asparagine 123 and threonine 173. Lysine 175 (proton acceptor) is an active-site residue. A substrate-binding site is contributed by lysine 177. The Mg(2+) site is built by lysine 201, aspartate 203, and glutamate 204. N6-carboxylysine is present on lysine 201. Catalysis depends on histidine 294, which acts as the Proton acceptor. Substrate contacts are provided by arginine 295, histidine 327, and serine 379.

The protein belongs to the RuBisCO large chain family. Type I subfamily. As to quaternary structure, heterohexadecamer of 8 large chains and 8 small chains; disulfide-linked. The disulfide link is formed within the large subunit homodimers. Mg(2+) is required as a cofactor. Post-translationally, the disulfide bond which can form in the large chain dimeric partners within the hexadecamer appears to be associated with oxidative stress and protein turnover.

It is found in the plastid. The protein resides in the chloroplast. It carries out the reaction 2 (2R)-3-phosphoglycerate + 2 H(+) = D-ribulose 1,5-bisphosphate + CO2 + H2O. The enzyme catalyses D-ribulose 1,5-bisphosphate + O2 = 2-phosphoglycolate + (2R)-3-phosphoglycerate + 2 H(+). RuBisCO catalyzes two reactions: the carboxylation of D-ribulose 1,5-bisphosphate, the primary event in carbon dioxide fixation, as well as the oxidative fragmentation of the pentose substrate in the photorespiration process. Both reactions occur simultaneously and in competition at the same active site. The protein is Ribulose bisphosphate carboxylase large chain of Coffea arabica (Arabian coffee).